Reading from the N-terminus, the 279-residue chain is Oxygen-dependent coproporphyrinogen-III oxidase (279 aa).

Serine 102 is a substrate binding site. A divalent metal cation is bound by residues histidine 106 and histidine 116. Catalysis depends on histidine 116, which acts as the Proton donor. A substrate-binding site is contributed by 118 to 120; it reads NTR. A divalent metal cation-binding residues include histidine 149 and histidine 179. Positions 244–279 are important for dimerization; sequence YVEFNLLYDRGTKFGLMTDGNVEAILMSLPPEVKFN.

Belongs to the aerobic coproporphyrinogen-III oxidase family. Homodimer. A divalent metal cation serves as cofactor.

The protein localises to the cytoplasm. The catalysed reaction is coproporphyrinogen III + O2 + 2 H(+) = protoporphyrinogen IX + 2 CO2 + 2 H2O. Its pathway is porphyrin-containing compound metabolism; protoporphyrin-IX biosynthesis; protoporphyrinogen-IX from coproporphyrinogen-III (O2 route): step 1/1. Functionally, involved in the heme biosynthesis. Catalyzes the aerobic oxidative decarboxylation of propionate groups of rings A and B of coproporphyrinogen-III to yield the vinyl groups in protoporphyrinogen-IX. In Rickettsia rickettsii (strain Iowa), this protein is Oxygen-dependent coproporphyrinogen-III oxidase.